We begin with the raw amino-acid sequence, 87 residues long: Small ribosomal subunit protein uS17 (87 aa).

Belongs to the universal ribosomal protein uS17 family. In terms of assembly, part of the 30S ribosomal subunit.

One of the primary rRNA binding proteins, it binds specifically to the 5'-end of 16S ribosomal RNA. This chain is Small ribosomal subunit protein uS17, found in Bacillus cytotoxicus (strain DSM 22905 / CIP 110041 / 391-98 / NVH 391-98).